The following is a 198-amino-acid chain: Small ribosomal subunit protein eS1 (198 aa).

This sequence belongs to the eukaryotic ribosomal protein eS1 family.

This Methanosphaerula palustris (strain ATCC BAA-1556 / DSM 19958 / E1-9c) protein is Small ribosomal subunit protein eS1.